Reading from the N-terminus, the 510-residue chain is 2,3-bisphosphoglycerate-independent phosphoglycerate mutase (510 aa).

Residues Asp14 and Ser64 each contribute to the Mn(2+) site. Ser64 functions as the Phosphoserine intermediate in the catalytic mechanism. Substrate is bound by residues His125, 155–156 (RD), Arg187, Arg193, 259–262 (RADR), and Lys332. The Mn(2+) site is built by Asp399, His403, Asp440, His441, and His459.

The protein belongs to the BPG-independent phosphoglycerate mutase family. Monomer. Mn(2+) serves as cofactor.

It catalyses the reaction (2R)-2-phosphoglycerate = (2R)-3-phosphoglycerate. It participates in carbohydrate degradation; glycolysis; pyruvate from D-glyceraldehyde 3-phosphate: step 3/5. Catalyzes the interconversion of 2-phosphoglycerate and 3-phosphoglycerate. Essential for the growth and pathogenicity on the host plant. This Pseudomonas syringae pv. tomato (strain ATCC BAA-871 / DC3000) protein is 2,3-bisphosphoglycerate-independent phosphoglycerate mutase.